A 124-amino-acid chain; its full sequence is ATP synthase epsilon chain (124 aa).

Residues 97 to 124 form a disordered region; that stretch reads ARVREASSEEEKSRAESELRAVKRSKEK.

Belongs to the ATPase epsilon chain family. As to quaternary structure, F-type ATPases have 2 components, CF(1) - the catalytic core - and CF(0) - the membrane proton channel. CF(1) has five subunits: alpha(3), beta(3), gamma(1), delta(1), epsilon(1). CF(0) has three main subunits: a, b and c.

It is found in the cell membrane. Produces ATP from ADP in the presence of a proton gradient across the membrane. The sequence is that of ATP synthase epsilon chain from Corynebacterium urealyticum (strain ATCC 43042 / DSM 7109).